Consider the following 241-residue polypeptide: uncharacterized protein (241 aa).

The region spanning 147-212 (FSYRSVILTL…EMYAWINSAQ (66 aa)) is the HTH luxR-type domain.

This is an uncharacterized protein from Escherichia coli O157:H7.